The primary structure comprises 296 residues: Formamidopyrimidine-DNA glycosylase (296 aa).

P2 (schiff-base intermediate with DNA) is an active-site residue. E3 functions as the Proton donor in the catalytic mechanism. K61 acts as the Proton donor; for beta-elimination activity in catalysis. DNA is bound by residues H104, R128, and K174. The segment at 260–294 (HAYGQQGQACDRCGSNIIREKFANRSSHFCPRCQL) adopts an FPG-type zinc-finger fold. Catalysis depends on R284, which acts as the Proton donor; for delta-elimination activity.

This sequence belongs to the FPG family. As to quaternary structure, monomer. Requires Zn(2+) as cofactor.

The enzyme catalyses Hydrolysis of DNA containing ring-opened 7-methylguanine residues, releasing 2,6-diamino-4-hydroxy-5-(N-methyl)formamidopyrimidine.. It catalyses the reaction 2'-deoxyribonucleotide-(2'-deoxyribose 5'-phosphate)-2'-deoxyribonucleotide-DNA = a 3'-end 2'-deoxyribonucleotide-(2,3-dehydro-2,3-deoxyribose 5'-phosphate)-DNA + a 5'-end 5'-phospho-2'-deoxyribonucleoside-DNA + H(+). Functionally, involved in base excision repair of DNA damaged by oxidation or by mutagenic agents. Acts as a DNA glycosylase that recognizes and removes damaged bases. Has a preference for oxidized purines, such as 7,8-dihydro-8-oxoguanine (8-oxoG). Has AP (apurinic/apyrimidinic) lyase activity and introduces nicks in the DNA strand. Cleaves the DNA backbone by beta-delta elimination to generate a single-strand break at the site of the removed base with both 3'- and 5'-phosphates. The polypeptide is Formamidopyrimidine-DNA glycosylase (Corynebacterium diphtheriae (strain ATCC 700971 / NCTC 13129 / Biotype gravis)).